The sequence spans 114 residues: MKKEYRLQKNEEFQAVFREGRSVANRQFVVYTLKADQTHFRVGLSVSKKLGNAVERNRMKRLMRESLRLLEPNVAPNDYVIIARKPATALTQSEVTESLKHVFKRAKVWQKQGR.

Belongs to the RnpA family. In terms of assembly, consists of a catalytic RNA component (M1 or rnpB) and a protein subunit.

It catalyses the reaction Endonucleolytic cleavage of RNA, removing 5'-extranucleotides from tRNA precursor.. Functionally, RNaseP catalyzes the removal of the 5'-leader sequence from pre-tRNA to produce the mature 5'-terminus. It can also cleave other RNA substrates such as 4.5S RNA. The protein component plays an auxiliary but essential role in vivo by binding to the 5'-leader sequence and broadening the substrate specificity of the ribozyme. The chain is Ribonuclease P protein component from Exiguobacterium sp. (strain ATCC BAA-1283 / AT1b).